A 369-amino-acid chain; its full sequence is D-alanine--D-alanine ligase (369 aa).

An ATP-grasp domain is found at 152-359; the sequence is KKLFAAEGLP…YPSLLATMVE (208 aa). 180–235 contacts ATP; sequence RERLGLPVFVKPARGGSSIGVSRVSSWDELDAAVAAARDHDPKVIVEAAIAGRELE. Asp314, Glu326, and Asn328 together coordinate Mg(2+).

This sequence belongs to the D-alanine--D-alanine ligase family. It depends on Mg(2+) as a cofactor. Mn(2+) serves as cofactor.

The protein localises to the cytoplasm. It catalyses the reaction 2 D-alanine + ATP = D-alanyl-D-alanine + ADP + phosphate + H(+). The protein operates within cell wall biogenesis; peptidoglycan biosynthesis. In terms of biological role, cell wall formation. The chain is D-alanine--D-alanine ligase from Mycobacterium avium (strain 104).